A 249-amino-acid chain; its full sequence is Probable transcriptional regulatory protein mll3945 (249 aa).

Belongs to the TACO1 family.

The protein resides in the cytoplasm. This is Probable transcriptional regulatory protein mll3945 from Mesorhizobium japonicum (strain LMG 29417 / CECT 9101 / MAFF 303099) (Mesorhizobium loti (strain MAFF 303099)).